Reading from the N-terminus, the 330-residue chain is MATKWGICSTGRISNDFVVALSTLPAVDHQVVAVAARDLEKAKNFAQIHNIPKAYGSYEELAKDPDIDVIYVGAIHPVHRDVVLMCLQNGKNVLCEKPLAMNSAQVRELIAAARKFNVFLMEAFWSRFFPVYEEIRTLLSQKAIGDVKFIRAEFGTPIYTVPRAVEKELGGGALLDIGCYCVQFVTMVFNGEKPESVTARGFLHETGVDETISIILEYSGKRQAILSSTIMAALPNQTAICGTKGIIQIPSFMWSPTSVIVNGKETKFDVPHTTEPMNFSNGTGMSYEAEHVRQCLLKGLKESPIMSLADSEMIATIMDEALEQLGVMYP.

Belongs to the Gfo/Idh/MocA family. Homodimer.

The catalysed reaction is (1R,2R)-1,2-dihydrobenzene-1,2-diol + NADP(+) = catechol + NADPH + H(+). The enzyme catalyses D-xylose + NADP(+) = D-xylono-1,5-lactone + NADPH + H(+). The chain is Trans-1,2-dihydrobenzene-1,2-diol dehydrogenase (dhdh) from Xenopus laevis (African clawed frog).